The primary structure comprises 386 residues: GTPase Obg (386 aa).

Residues 1 to 159 form the Obg domain; it reads MKFVDEASIL…RELLLELMLL (159 aa). The tract at residues 127 to 147 is disordered; the sequence is NTRFKSSVNRTPRQKTNGTPG. Residues 129-145 are compositionally biased toward polar residues; the sequence is RFKSSVNRTPRQKTNGT. The 174-residue stretch at 160–333 folds into the OBG-type G domain; that stretch reads ADVGMLGMPN…LCWDVMTFII (174 aa). Residues 166 to 173, 191 to 195, 213 to 216, 283 to 286, and 314 to 316 each bind GTP; these read GMPNAGKS, FTTLV, DIPG, NKID, and SAA. Mg(2+)-binding residues include S173 and T193.

The protein belongs to the TRAFAC class OBG-HflX-like GTPase superfamily. OBG GTPase family. In terms of assembly, monomer. It depends on Mg(2+) as a cofactor.

It is found in the cytoplasm. Its function is as follows. An essential GTPase which binds GTP, GDP and possibly (p)ppGpp with moderate affinity, with high nucleotide exchange rates and a fairly low GTP hydrolysis rate. Plays a role in control of the cell cycle, stress response, ribosome biogenesis and in those bacteria that undergo differentiation, in morphogenesis control. This is GTPase Obg from Escherichia coli (strain UTI89 / UPEC).